Reading from the N-terminus, the 316-residue chain is NADH-cytochrome b5 reductase-like (316 aa).

Residues 17–53 (KPVEPLPSQCCGSGCSPCVFDLYYRDLERWETARARN) form the Oxidoreductase-like domain. The region spanning 76–178 (ETFLAFHIST…RGPFGSFLYE (103 aa)) is the FAD-binding FR-type domain. FAD contacts are provided by residues 158-173 (ESWR…GPFG) and 183-215 (GELL…TFVT).

Belongs to the flavoprotein pyridine nucleotide cytochrome reductase family. FAD serves as cofactor.

It carries out the reaction 2 Fe(III)-[cytochrome b5] + NADH = 2 Fe(II)-[cytochrome b5] + NAD(+) + H(+). In terms of biological role, NADH-cytochrome b5 reductases are involved in desaturation and elongation of fatty acids, cholesterol biosynthesis, drug metabolism, and, in erythrocyte, methemoglobin reduction. This is NADH-cytochrome b5 reductase-like (Cyb5rl) from Mus musculus (Mouse).